A 157-amino-acid chain; its full sequence is Ribosomal RNA large subunit methyltransferase H (157 aa).

Residues Leu73, Gly105, and 124–129 (MSKMTF) each bind S-adenosyl-L-methionine.

This sequence belongs to the RNA methyltransferase RlmH family. Homodimer.

It is found in the cytoplasm. It carries out the reaction pseudouridine(1915) in 23S rRNA + S-adenosyl-L-methionine = N(3)-methylpseudouridine(1915) in 23S rRNA + S-adenosyl-L-homocysteine + H(+). Specifically methylates the pseudouridine at position 1915 (m3Psi1915) in 23S rRNA. This chain is Ribosomal RNA large subunit methyltransferase H, found in Bacteroides thetaiotaomicron (strain ATCC 29148 / DSM 2079 / JCM 5827 / CCUG 10774 / NCTC 10582 / VPI-5482 / E50).